The chain runs to 223 residues: Deoxyribose-phosphate aldolase (223 aa).

Asp89 serves as the catalytic Proton donor/acceptor. Catalysis depends on Lys152, which acts as the Schiff-base intermediate with acetaldehyde. The Proton donor/acceptor role is filled by Lys181.

Belongs to the DeoC/FbaB aldolase family. DeoC type 1 subfamily.

The protein localises to the cytoplasm. It carries out the reaction 2-deoxy-D-ribose 5-phosphate = D-glyceraldehyde 3-phosphate + acetaldehyde. Its pathway is carbohydrate degradation; 2-deoxy-D-ribose 1-phosphate degradation; D-glyceraldehyde 3-phosphate and acetaldehyde from 2-deoxy-alpha-D-ribose 1-phosphate: step 2/2. In terms of biological role, catalyzes a reversible aldol reaction between acetaldehyde and D-glyceraldehyde 3-phosphate to generate 2-deoxy-D-ribose 5-phosphate. This Bacillus cereus (strain B4264) protein is Deoxyribose-phosphate aldolase.